We begin with the raw amino-acid sequence, 740 residues long: Vacuolar protein sorting-associated protein 51 homolog (740 aa).

Coiled coils occupy residues S65 to L87 and R322 to Q344.

This sequence belongs to the VPS51 family. As to quaternary structure, component of the Golgi-associated retrograde protein (GARP) complex.

Its function is as follows. May act as a component of the GARP complex that is involved in retrograde transport from early and late endosomes to the trans-Golgi network (TGN). The chain is Vacuolar protein sorting-associated protein 51 homolog from Drosophila melanogaster (Fruit fly).